We begin with the raw amino-acid sequence, 296 residues long: Coatomer subunit epsilon (296 aa).

It belongs to the COPE family. In terms of assembly, oligomeric complex that consists of at least the alpha, beta, beta', gamma, delta, epsilon and zeta subunits. Interacts with the ESCRT-0 subunit VPS27.

Its subcellular location is the cytoplasm. It is found in the golgi apparatus membrane. The protein localises to the cytoplasmic vesicle. It localises to the COPI-coated vesicle membrane. In terms of biological role, the coatomer is a cytosolic protein complex that binds to dilysine motifs and reversibly associates with Golgi non-clathrin-coated vesicles, which further mediate biosynthetic protein transport from the ER, via the Golgi up to the trans Golgi network. The coatomer complex is required for budding from Golgi membranes, and is essential for the retrograde Golgi-to-ER transport of dilysine-tagged proteins. This Saccharomyces cerevisiae (strain ATCC 204508 / S288c) (Baker's yeast) protein is Coatomer subunit epsilon (SEC28).